We begin with the raw amino-acid sequence, 170 residues long: Zinc finger matrin-type protein 5 (170 aa).

Residues 51 to 79 (EQNKRPCRKFLLTGQCDFGSNCRFSHMSE) form a C3H1-type zinc finger. Positions 150–170 (PPSLRAPPPGGWPLQPRVQWG) are disordered.

As to quaternary structure, component of the U11/U12 snRNPs that are part of the U12-type spliceosome. Not found in the major spliceosome.

Its subcellular location is the nucleus. In Homo sapiens (Human), this protein is Zinc finger matrin-type protein 5 (ZMAT5).